Reading from the N-terminus, the 158-residue chain is Cytochrome b6-f complex subunit 4 (158 aa).

3 helical membrane passes run 34–54, 93–113, and 129–149; these read LLYI…GLAV, LLGV…PFLE, and TVFL…TLPI.

Belongs to the cytochrome b family. PetD subfamily. As to quaternary structure, the 4 large subunits of the cytochrome b6-f complex are cytochrome b6, subunit IV (17 kDa polypeptide, petD), cytochrome f and the Rieske protein, while the 4 small subunits are petG, petL, petM and petN. The complex functions as a dimer.

It localises to the plastid. The protein localises to the chloroplast thylakoid membrane. In terms of biological role, component of the cytochrome b6-f complex, which mediates electron transfer between photosystem II (PSII) and photosystem I (PSI), cyclic electron flow around PSI, and state transitions. This is Cytochrome b6-f complex subunit 4 from Liriodendron tulipifera (Tuliptree).